A 568-amino-acid polypeptide reads, in one-letter code: Fumarate hydratase 2 (568 aa).

Cysteine 133 contacts [4Fe-4S] cluster. Residues 134 to 135 (QD), arginine 173, glycine 216, and 219 to 225 (NKAYLYQ) each bind (S)-malate. Residues cysteine 252 and cysteine 346 each coordinate [4Fe-4S] cluster. Residues arginine 421, 467 to 471 (TTAGR), and lysine 491 contribute to the (S)-malate site.

This sequence belongs to the class-I fumarase family. Homodimer. [4Fe-4S] cluster serves as cofactor.

The protein resides in the cytoplasm. Its subcellular location is the cytosol. The catalysed reaction is (S)-malate = fumarate + H2O. Specifically and competitively inhibited by 2-thiomalate, which coordinates with the catalytic [4Fe-4S] cluster. Weakly inhibited by malonate. Functionally, cytosolic fumarate hydratase that catalyzes the reversible hydration of fumarate to (S)-malate. This Leishmania major protein is Fumarate hydratase 2.